Here is a 368-residue protein sequence, read N- to C-terminus: Phosphate acyltransferase (368 aa).

Belongs to the PlsX family. As to quaternary structure, homodimer. Probably interacts with PlsY.

The protein resides in the cytoplasm. The catalysed reaction is a fatty acyl-[ACP] + phosphate = an acyl phosphate + holo-[ACP]. Its pathway is lipid metabolism; phospholipid metabolism. Its function is as follows. Catalyzes the reversible formation of acyl-phosphate (acyl-PO(4)) from acyl-[acyl-carrier-protein] (acyl-ACP). This enzyme utilizes acyl-ACP as fatty acyl donor, but not acyl-CoA. The chain is Phosphate acyltransferase from Granulibacter bethesdensis (strain ATCC BAA-1260 / CGDNIH1).